Reading from the N-terminus, the 54-residue chain is UPF0391 membrane protein Sde_0270 (54 aa).

The next 2 membrane-spanning stretches (helical) occupy residues 6–26 (IVFLLIALVAGLFGFVGIAGV) and 29–49 (GIAKILFFVFLIAFVVSLVIG).

This sequence belongs to the UPF0391 family.

The protein resides in the cell membrane. This Saccharophagus degradans (strain 2-40 / ATCC 43961 / DSM 17024) protein is UPF0391 membrane protein Sde_0270.